Reading from the N-terminus, the 207-residue chain is Dephospho-CoA kinase (207 aa).

The DPCK domain occupies 10 to 207 (ILGLTGGIGS…FYLTLRGGQS (198 aa)). 18–23 (GSGKSA) provides a ligand contact to ATP.

The protein belongs to the CoaE family.

The protein resides in the cytoplasm. It catalyses the reaction 3'-dephospho-CoA + ATP = ADP + CoA + H(+). It functions in the pathway cofactor biosynthesis; coenzyme A biosynthesis; CoA from (R)-pantothenate: step 5/5. In terms of biological role, catalyzes the phosphorylation of the 3'-hydroxyl group of dephosphocoenzyme A to form coenzyme A. This is Dephospho-CoA kinase from Pseudomonas syringae pv. tomato (strain ATCC BAA-871 / DC3000).